The primary structure comprises 152 residues: ESAT-6 secretion machinery protein EssA (152 aa).

The Cytoplasmic portion of the chain corresponds to 1–114 (MLMNSVIALT…PYIQNKQEKK (114 aa)). The interval 62–83 (ERQQQIKNDMFQNQASHSTRLN) is disordered. Positions 66-80 (QIKNDMFQNQASHST) are enriched in polar residues. The helical transmembrane segment at 115–135 (IFPYILMSVGAFLTLGFVIFS) threads the bilayer. Topologically, residues 136–152 (IHKGRRTKNESARKSNI) are extracellular.

It belongs to the EssA family.

It is found in the cell membrane. Its function is as follows. Component of the ESAT-6 secretion system (Ess). Required for the secretion of EsxA and EsxB. The protein is ESAT-6 secretion machinery protein EssA of Staphylococcus aureus (strain COL).